We begin with the raw amino-acid sequence, 456 residues long: Trigger factor (456 aa).

The PPIase FKBP-type domain occupies 192-277 (GDTVVIDFVG…IHEVKTKEVP (86 aa)).

The protein belongs to the FKBP-type PPIase family. Tig subfamily.

The protein localises to the cytoplasm. The enzyme catalyses [protein]-peptidylproline (omega=180) = [protein]-peptidylproline (omega=0). Functionally, involved in protein export. Acts as a chaperone by maintaining the newly synthesized protein in an open conformation. Functions as a peptidyl-prolyl cis-trans isomerase. The chain is Trigger factor from Streptococcus pyogenes serotype M2 (strain MGAS10270).